Consider the following 244-residue polypeptide: Ribonuclease PH (244 aa).

Phosphate is bound by residues R87 and 125–127 (GTR).

The protein belongs to the RNase PH family. Homohexameric ring arranged as a trimer of dimers.

The enzyme catalyses tRNA(n+1) + phosphate = tRNA(n) + a ribonucleoside 5'-diphosphate. Its function is as follows. Phosphorolytic 3'-5' exoribonuclease that plays an important role in tRNA 3'-end maturation. Removes nucleotide residues following the 3'-CCA terminus of tRNAs; can also add nucleotides to the ends of RNA molecules by using nucleoside diphosphates as substrates, but this may not be physiologically important. Probably plays a role in initiation of 16S rRNA degradation (leading to ribosome degradation) during starvation. This Synechococcus sp. (strain JA-2-3B'a(2-13)) (Cyanobacteria bacterium Yellowstone B-Prime) protein is Ribonuclease PH.